Here is a 137-residue protein sequence, read N- to C-terminus: Large ribosomal subunit protein uL16 (137 aa).

The protein belongs to the universal ribosomal protein uL16 family. Part of the 50S ribosomal subunit.

In terms of biological role, binds 23S rRNA and is also seen to make contacts with the A and possibly P site tRNAs. The chain is Large ribosomal subunit protein uL16 from Streptococcus thermophilus (strain ATCC BAA-491 / LMD-9).